The sequence spans 223 residues: Sigma non-opioid intracellular receptor 1 (223 aa).

The Lumenal portion of the chain corresponds to 1–9 (MPWAAGRRW). The segment at 2-8 (PWAAGRR) is targeting to endoplasmic reticulum-associated lipid droplets. Residues 10–30 (AWITLILTIIAVLIQAAWLWL) traverse the membrane as a helical segment. Topologically, residues 31–223 (GTQNFVFSRE…LTTYLFGQDS (193 aa)) are cytoplasmic. The important for ligand-binding stretch occupies residues 99 to 106 (SLSEYVLL). Positions 177–223 (VIPSTLFFALADTFFSTQDYLTLFYTLRAYARGLRLELTTYLFGQDS) are C-terminal hydrophobic region.

The protein belongs to the ERG2 family. As to quaternary structure, homotrimer. Interacts with KCNA4. Interacts with KCNA2; cocaine consumption leads to increased interaction. Forms a ternary complex with ANK2 and ITPR3. The complex is disrupted by agonists. Interacts with RNF112 in an oxidative stress-regulated manner. In terms of tissue distribution, widely expressed with higher expression in liver, brain, kidney and thymus. Expressed throughout the brain with higher expression within cerebral cortex, hippocampus and cerebellum. Within the hippocampus expressed in cornu ammonis pyramidal neurons, the granular cells of the dentate gyrus as well as interneurons. Within the cerebellum, expressed in Purkinje cell bodies. Highly expressed in the brainstem and motor neurons of the spinal cord. Expressed by neural retina, retinal pigment epithelial cells and lens.

The protein localises to the nucleus inner membrane. It is found in the nucleus outer membrane. Its subcellular location is the nucleus envelope. The protein resides in the cytoplasmic vesicle. It localises to the endoplasmic reticulum membrane. The protein localises to the membrane. It is found in the lipid droplet. Its subcellular location is the cell junction. The protein resides in the cell membrane. It localises to the cell projection. The protein localises to the growth cone. It is found in the postsynaptic density membrane. In terms of biological role, functions in lipid transport from the endoplasmic reticulum and is involved in a wide array of cellular functions probably through regulation of the biogenesis of lipid microdomains at the plasma membrane. Involved in the regulation of different receptors it plays a role in BDNF signaling and EGF signaling. Also regulates ion channels like the potassium channel and could modulate neurotransmitter release. Plays a role in calcium signaling through modulation together with ANK2 of the ITP3R-dependent calcium efflux at the endoplasmic reticulum. Plays a role in several other cell functions including proliferation, survival and death. Originally identified for its ability to bind various psychoactive drugs it is involved in learning processes, memory and mood alteration. Necessary for proper mitochondrial axonal transport in motor neurons, in particular the retrograde movement of mitochondria. Plays a role in protecting cells against oxidative stress-induced cell death via its interaction with RNF112. The chain is Sigma non-opioid intracellular receptor 1 (Sigmar1) from Mus musculus (Mouse).